Here is a 113-residue protein sequence, read N- to C-terminus: uncharacterized protein (113 aa).

3 helical membrane-spanning segments follow: residues Ile9–Tyr31, Val36–Gln58, and Ile71–Val90.

It is found in the cell membrane. This is an uncharacterized protein from Archaeoglobus fulgidus (strain ATCC 49558 / DSM 4304 / JCM 9628 / NBRC 100126 / VC-16).